The primary structure comprises 82 residues: uncharacterized protein (82 aa).

2 helical membrane-spanning segments follow: residues 29-49 and 55-75; these read LMNAGSAVADIISPIAFGIII and WSLPFYGSVALLVIGIFLTFF.

Its subcellular location is the cell membrane. This is an uncharacterized protein from Escherichia coli (strain K12).